The primary structure comprises 79 residues: Moronecidin (79 aa).

A signal peptide spans 1-22; sequence MKCATLFLVLSMVVLMAEPGDA. The residue at position 44 (Gly-44) is a Glycine amide. The tract at residues 45–79 is disordered; it reads GKAEQDQQDQQYQQEQQEQQAQQYQRFNRERAAFD. Residues 47 to 79 constitute a propeptide that is removed on maturation; that stretch reads AEQDQQDQQYQQEQQEQQAQQYQRFNRERAAFD. The segment covering 52–69 has biased composition (low complexity); sequence QDQQYQQEQQEQQAQQYQ.

In terms of tissue distribution, expressed in mast cells in gill, skin and gut, and in lining blood vessels in the viscera. Also in intestine, spleen, anterior kidney, and blood cells.

It localises to the secreted. Functionally, antimicrobial peptide with broad-spectrum activity against Gram-positive and Gram-negative bacteria as well as against a variety of fungi. Rapidly inactivates channel catfish herpesvirus (ED(50)=4 uM) and frog virus 3 (ED(50)=13 uM) over a wide temperature range. Seems to disrupt the membranes by adopting an alpha helical conformation and forming toroidal pores. Has hemolytic activity. This chain is Moronecidin, found in Morone saxatilis (Striped bass).